Consider the following 556-residue polypeptide: WD repeat-containing protein srw1 (556 aa).

Residues 1 to 80 are disordered; it reads MDEFDGFTRP…NEGDRFIPSR (80 aa). The span at 12–37 shows a compositional bias: low complexity; sequence SSNSSANRNSNNSMNRVENNNSNSDS. Residues 43–55 are compositionally biased toward basic and acidic residues; sequence SRGDAHTRMRQGF. Ser62 is subject to Phosphoserine. Residues 69 to 78 are compositionally biased toward basic and acidic residues; it reads RTNEGDRFIP. At Thr98 the chain carries Phosphothreonine. Over residues 126 to 146 the composition is skewed to polar residues; sequence TFNNSPIATPNTTIGVSTPRT. The interval 126-173 is disordered; that stretch reads TFNNSPIATPNTTIGVSTPRTDSGIDDIELTQRTPPSSSHTSSSILQN. Residues 159-169 show a composition bias toward low complexity; sequence TPPSSSHTSSS. At Thr177 the chain carries Phosphothreonine. Residues Ser187 and Ser214 each carry the phosphoserine modification. 7 WD repeats span residues 246-285, 289-328, 331-368, 372-411, 414-456, 458-499, and 502-541; these read GLAG…VTVM, YPTD…KTRT, GHTE…HYFR, AHRQ…PLYS, NHIA…MLHN, DTGS…RVGT, and GHTD…SKHS.

It belongs to the WD repeat CDC20/Fizzy family. Phosphorylated by cdc2-cdc13-CDK complex. This targets srw1 for proteolysis which in turn promotes cdc13 turnover. Dephosphorylated during G1 arrest.

Its subcellular location is the nucleus. Has a role in cell differentiation and cell cycling by negatively regulating cig2 and cdc12-associated cdc2. Down-regulates the level of cdc13, particularly in a nitrogen deprived environment. Regulator of cell cycle G1 phase progression. Prevents onset of mitosis during the pre-Start G1 period. Required for degradation of cdc13 mitotic cyclin B during G1 arrest but not during mitotic exit. This chain is WD repeat-containing protein srw1 (srw1), found in Schizosaccharomyces pombe (strain 972 / ATCC 24843) (Fission yeast).